The sequence spans 345 residues: Protein RecA (345 aa).

Glycine 66–threonine 73 provides a ligand contact to ATP.

It belongs to the RecA family.

It is found in the cytoplasm. Its function is as follows. Can catalyze the hydrolysis of ATP in the presence of single-stranded DNA, the ATP-dependent uptake of single-stranded DNA by duplex DNA, and the ATP-dependent hybridization of homologous single-stranded DNAs. It interacts with LexA causing its activation and leading to its autocatalytic cleavage. The sequence is that of Protein RecA from Frankia casuarinae (strain DSM 45818 / CECT 9043 / HFP020203 / CcI3).